The chain runs to 166 residues: Photosystem I assembly protein Ycf3 (166 aa).

3 TPR repeats span residues 35–68 (AFTY…EIDA), 72–105 (SYML…NPRL), and 120–153 (GEQA…SPTS).

It belongs to the Ycf3 family.

Its subcellular location is the plastid. It is found in the chloroplast thylakoid membrane. In terms of biological role, essential for the assembly of the photosystem I (PSI) complex. May act as a chaperone-like factor to guide the assembly of the PSI subunits. The chain is Photosystem I assembly protein Ycf3 from Bigelowiella natans (Pedinomonas minutissima).